Here is a 294-residue protein sequence, read N- to C-terminus: Small ribosomal subunit protein uS2 (294 aa).

Belongs to the universal ribosomal protein uS2 family.

The chain is Small ribosomal subunit protein uS2 (rpsB) from Mycoplasma pneumoniae (strain ATCC 29342 / M129 / Subtype 1) (Mycoplasmoides pneumoniae).